The primary structure comprises 165 residues: MALRIWASSTAKALRLSSASRPHFSPLFRCFSSAAVLDGLKYANSHEWVKHEGSVATIGITDHAQDHLGEVVFVELPEVGGSVTKATGFGAVESVKATSDVNSPISGEIVEVNSKLTKTPGLINKSPYEDGWMIKVKPSNPSELDSLMGPKEYTKFCEEEGAAAH.

A mitochondrion-targeting transit peptide spans 1–31 (MALRIWASSTAKALRLSSASRPHFSPLFRCF). In terms of domain architecture, Lipoyl-binding spans 55 to 137 (VATIGITDHA…YEDGWMIKVK (83 aa)). Residue Lys-96 is modified to N6-lipoyllysine.

Belongs to the GcvH family. As to quaternary structure, the glycine cleavage system is composed of four components that only loosely associate: the P protein (EC 1.4.4.2), the T protein (EC 2.1.2.10), the L protein (EC 1.8.1.4) and the lipoyl-bearing H protein. (R)-lipoate is required as a cofactor. Expressed in roots, stems and leaves.

The protein resides in the mitochondrion. Functionally, the glycine cleavage system catalyzes the degradation of glycine. The H protein shuttles the methylamine group of glycine from the P protein to the T protein. The protein is Glycine cleavage system H protein, mitochondrial (GDCSH) of Flaveria trinervia (Clustered yellowtops).